Here is a 181-residue protein sequence, read N- to C-terminus: MDFECGSLVTDGERVSNPTDRGFRWSAAPRGMLKPSGWRADGGVWFCDVTLDYDTIVAHGTLQDDNLVFMTRLYFGPKGGLIPDDVKSDRHVCPDCGVKVIRFTLVDDFLDEHVYHSRGGCPRIRQFLGQRVLSEYYELTQFLKGDRPYPARRKWDLSRDSAVLKAYAVYASPKDNSVQTG.

This is an uncharacterized protein from Ictalurid herpesvirus 1 (strain Auburn) (IcHV-1).